The primary structure comprises 131 residues: Squamosa promoter-binding protein 1 (131 aa).

Positions 1-10 (MDTSKGEGKR) are enriched in basic and acidic residues. Residues 1-52 (MDTSKGEGKRVIKLPGSQEQGEEEDDIGEDSKKTRALTPSGKRASGSTQRSC) are disordered. The SBP-type zinc finger occupies 49-126 (QRSCQVENCA…AGHNERRRKS (78 aa)). Residues cysteine 52, cysteine 57, cysteine 74, histidine 77, cysteine 93, cysteine 96, histidine 100, and cysteine 112 each coordinate Zn(2+). Positions 109–125 (KRSCRRRLAGHNERRRK) match the Bipartite nuclear localization signal motif.

The protein resides in the nucleus. Probable transcriptional factor. Binds to the promoter of the SQUAMOSA gene. The chain is Squamosa promoter-binding protein 1 (SBP1) from Antirrhinum majus (Garden snapdragon).